A 665-amino-acid polypeptide reads, in one-letter code: Methionine--tRNA ligase (665 aa).

The 'HIGH' region signature appears at 12–22; the sequence is YYPSGKLHIGS. The short motif at 308–312 is the 'KMSKS' region element; the sequence is KMSKS. Lys-311 is an ATP binding site. The 104-residue stretch at 562–665 folds into the tRNA-binding domain; the sequence is TFDAVEIRVA…SSVPNGSIIG (104 aa).

The protein belongs to the class-I aminoacyl-tRNA synthetase family. MetG type 2B subfamily. Homodimer.

It is found in the cytoplasm. The enzyme catalyses tRNA(Met) + L-methionine + ATP = L-methionyl-tRNA(Met) + AMP + diphosphate. Functionally, is required not only for elongation of protein synthesis but also for the initiation of all mRNA translation through initiator tRNA(fMet) aminoacylation. The chain is Methionine--tRNA ligase (metG) from Streptococcus pyogenes serotype M1.